A 553-amino-acid chain; its full sequence is ATP synthase F(1) complex subunit alpha, mitochondrial (553 aa).

A mitochondrion-targeting transit peptide spans 1-43 (MLSVRVAAAVARALPRRAGLVSKNALGSSFIAARNLHASNSRL). Glutamine 44 is modified (pyrrolidone carboxylic acid). Residues serine 53 and serine 65 each carry the phosphoserine modification. Serine 76 is subject to Phosphoserine; alternate. O-linked (GlcNAc) serine; alternate glycosylation is present at serine 76. Residue serine 106 is modified to Phosphoserine. Residues lysine 123, lysine 126, and lysine 132 each carry the N6-acetyllysine modification. Threonine 134 carries the phosphothreonine modification. Lysine 161 carries the post-translational modification N6-acetyllysine; alternate. Lysine 161 is subject to N6-succinyllysine; alternate. Serine 166 carries the post-translational modification Phosphoserine. N6-acetyllysine; alternate is present on lysine 167. Lysine 167 carries the N6-succinyllysine; alternate modification. Serine 184 is modified (phosphoserine). Arginine 204 carries the post-translational modification Omega-N-methylarginine. 5 residues coordinate ATP: glutamine 215, glycine 217, lysine 218, threonine 219, and serine 220. A Mg(2+)-binding site is contributed by threonine 219. Residues lysine 230 and lysine 239 each carry the N6-acetyllysine; alternate modification. N6-succinyllysine; alternate occurs at positions 230 and 239. Lysine 240 carries the N6-acetyllysine modification. N6-acetyllysine; alternate occurs at positions 261 and 305. 2 positions are modified to N6-succinyllysine; alternate: lysine 261 and lysine 305. A Mg(2+)-binding site is contributed by aspartate 312. Lysine 427 is modified (N6-acetyllysine; alternate). Lysine 427 is modified (N6-succinyllysine; alternate). Residue lysine 434 is modified to N6-acetyllysine. ATP-binding residues include glutamine 473 and glutamine 475. N6-acetyllysine; alternate is present on residues lysine 498, lysine 506, lysine 531, and lysine 539. N6-succinyllysine; alternate is present on residues lysine 498, lysine 506, lysine 531, and lysine 539. Position 541 is an N6-acetyllysine (lysine 541).

This sequence belongs to the ATPase alpha/beta chains family. As to quaternary structure, homotrimer. Component of the ATP synthase complex composed at least of ATP5F1A/subunit alpha, ATP5F1B/subunit beta, ATP5MC1/subunit c (homooctomer), MT-ATP6/subunit a, MT-ATP8/subunit 8, ATP5ME/subunit e, ATP5MF/subunit f, ATP5MG/subunit g, ATP5MK/subunit k, ATP5MJ/subunit j, ATP5F1C/subunit gamma, ATP5F1D/subunit delta, ATP5F1E/subunit epsilon, ATP5PF/subunit F6, ATP5PB/subunit b, ATP5PD/subunit d, ATP5PO/subunit OSCP. ATP synthase complex consists of a soluble F(1) head domain (subunits alpha(3) and beta(3)) - the catalytic core - and a membrane F(0) domain - the membrane proton channel (subunits c, a, 8, e, f, g, k and j). These two domains are linked by a central stalk (subunits gamma, delta, and epsilon) rotating inside the F1 region and a stationary peripheral stalk (subunits F6, b, d, and OSCP). Interacts with ATPAF2. Interacts with HRG; the interaction occurs on the surface of T-cells and alters the cell morphology when associated with concanavalin (in vitro). Interacts with PLG (angiostatin peptide); the interaction inhibits most of the angiogenic properties of angiostatin. Interacts with BLOC1S1. Interacts with BCL2L1 isoform BCL-X(L); the interaction mediates the association of BCL2L1 isoform BCL-X(L) with the mitochondrial membrane F(1)F(0) ATP synthase and enhances neurons metabolic efficiency. Interacts with CLN5 and PPT1. Interacts with S100A1; this interaction increases F1-ATPase activity. Interacts with ABCB7; this interaction allows the regulation of cellular iron homeostasis and cellular reactive oxygen species (ROS) levels in cardiomyocytes. In terms of processing, acetylated on lysine residues. BLOC1S1 is required for acetylation. As to expression, heart muscle (at protein level). Heart and liver.

It localises to the mitochondrion inner membrane. The protein localises to the cell membrane. Subunit alpha, of the mitochondrial membrane ATP synthase complex (F(1)F(0) ATP synthase or Complex V) that produces ATP from ADP in the presence of a proton gradient across the membrane which is generated by electron transport complexes of the respiratory chain. ATP synthase complex consist of a soluble F(1) head domain - the catalytic core - and a membrane F(1) domain - the membrane proton channel. These two domains are linked by a central stalk rotating inside the F(1) region and a stationary peripheral stalk. During catalysis, ATP synthesis in the catalytic domain of F(1) is coupled via a rotary mechanism of the central stalk subunits to proton translocation. In vivo, can only synthesize ATP although its ATP hydrolase activity can be activated artificially in vitro. With the catalytic subunit beta (ATP5F1B), forms the catalytic core in the F(1) domain. Subunit alpha does not bear the catalytic high-affinity ATP-binding sites. The protein is ATP synthase F(1) complex subunit alpha, mitochondrial of Bos taurus (Bovine).